We begin with the raw amino-acid sequence, 392 residues long: S-adenosylmethionine synthase (392 aa).

Residue His20 coordinates ATP. Asp22 contributes to the Mg(2+) binding site. Position 48 (Glu48) interacts with K(+). L-methionine is bound by residues Glu61 and Gln106. The segment at 106–116 is flexible loop; that stretch reads QSRDIINAIEK. Residues 171–173, Asp248, 254–255, Ala271, and Lys275 each bind ATP; these read DSK and RK. Asp248 provides a ligand contact to L-methionine. Lys279 serves as a coordination point for L-methionine.

Belongs to the AdoMet synthase family. Homotetramer; dimer of dimers. It depends on Mg(2+) as a cofactor. Requires K(+) as cofactor.

It is found in the cytoplasm. It carries out the reaction L-methionine + ATP + H2O = S-adenosyl-L-methionine + phosphate + diphosphate. It participates in amino-acid biosynthesis; S-adenosyl-L-methionine biosynthesis; S-adenosyl-L-methionine from L-methionine: step 1/1. Functionally, catalyzes the formation of S-adenosylmethionine (AdoMet) from methionine and ATP. The overall synthetic reaction is composed of two sequential steps, AdoMet formation and the subsequent tripolyphosphate hydrolysis which occurs prior to release of AdoMet from the enzyme. The polypeptide is S-adenosylmethionine synthase (Borreliella afzelii (strain PKo) (Borrelia afzelii)).